The sequence spans 116 residues: Large ribosomal subunit protein bL17 (116 aa).

The protein belongs to the bacterial ribosomal protein bL17 family. As to quaternary structure, part of the 50S ribosomal subunit. Contacts protein L32.

The polypeptide is Large ribosomal subunit protein bL17 (Prochlorococcus marinus (strain SARG / CCMP1375 / SS120)).